The primary structure comprises 192 residues: A-type ATP synthase subunit E (192 aa).

Belongs to the V-ATPase E subunit family. Has multiple subunits with at least A(3), B(3), C, D, E, F, H, I and proteolipid K(x).

Its subcellular location is the cell membrane. Component of the A-type ATP synthase that produces ATP from ADP in the presence of a proton gradient across the membrane. This chain is A-type ATP synthase subunit E, found in Sulfolobus acidocaldarius (strain ATCC 33909 / DSM 639 / JCM 8929 / NBRC 15157 / NCIMB 11770).